The chain runs to 615 residues: MSEGQINLAMVWSRVLDNLDNNSLPPQHRAWLPQTRPLGLIEDTALLAAPNEFAKEILETRLRTVISQALSAELGREIRVAVTVDPSAVPPSAPTEEASSTSSPDSSHPAPDQGSASYSGPRDTARQQAWSQQPVLPDPQPTAPQFTPSGRPGPLPGEPFSRGPDLLSSGWNPSSADPGSPASPAPVAESDTGPRYQSWDTSAPHWDQPNRWETPRPWEGGPHPGAGNRPHDVGGDSGVPSAEQPPVTPPLGVTERGDGSTNPTSGGPDQLNPKYTFDTFVIGSSNRFAHAAAVAVAEAPAKAYNPLFVYGGSGLGKTHLLHAIGHYTQRLYEGARVRYVSSEEFTNEFINSIRDGKADGFRRRYRDIDVLLVDDIQFLENKEQTQEEFFHTFNTLHNSNKQIVISSDRPPKQLVTLEDRLRNRFEWGLITDVQPPELETRIAILRKKAAQEGLNAPPEVLEFIASKISTNIRELEGALIRVTAFASLNRQSVDLHLTSIVLRDLIPNDEVPEITAAEIMAQTASYFGLTPEDLCGTSRSRVLVTARQIAMYLCRELTDLSLPKIGQQFGRDHTTVMHADRKIRSLMAERRSIYNQVTELTNRIKQQAHHNHHHL.

Positions 1 to 88 (MSEGQINLAM…RVAVTVDPSA (88 aa)) are domain I, interacts with DnaA modulators. The disordered stretch occupies residues 85–272 (DPSAVPPSAP…PTSGGPDQLN (188 aa)). A domain II region spans residues 88 to 269 (AVPPSAPTEE…STNPTSGGPD (182 aa)). 2 stretches are compositionally biased toward low complexity: residues 94 to 112 (PTEE…PAPD) and 173 to 190 (PSSA…VAES). The segment at 270 to 486 (QLNPKYTFDT…GALIRVTAFA (217 aa)) is domain III, AAA+ region. The ATP site is built by Gly-314, Gly-316, Lys-317, and Thr-318. The domain IV, binds dsDNA stretch occupies residues 487-615 (SLNRQSVDLH…QQAHHNHHHL (129 aa)).

It belongs to the DnaA family. As to quaternary structure, oligomerizes as a right-handed, spiral filament on DNA at oriC.

It is found in the cytoplasm. In terms of biological role, plays an essential role in the initiation and regulation of chromosomal replication. ATP-DnaA binds to the origin of replication (oriC) to initiate formation of the DNA replication initiation complex once per cell cycle. Binds the DnaA box (a 9 base pair repeat at the origin) and separates the double-stranded (ds)DNA. Forms a right-handed helical filament on oriC DNA; dsDNA binds to the exterior of the filament while single-stranded (ss)DNA is stabiized in the filament's interior. The ATP-DnaA-oriC complex binds and stabilizes one strand of the AT-rich DNA unwinding element (DUE), permitting loading of DNA polymerase. After initiation quickly degrades to an ADP-DnaA complex that is not apt for DNA replication. Binds acidic phospholipids. This chain is Chromosomal replication initiator protein DnaA, found in Thermobifida fusca (strain YX).